The primary structure comprises 204 residues: Thiamine-phosphate synthase (204 aa).

4-amino-2-methyl-5-(diphosphooxymethyl)pyrimidine-binding positions include glutamine 34–lysine 38 and aspartate 66. 2 residues coordinate Mg(2+): aspartate 67 and aspartate 86. Serine 104 provides a ligand contact to 4-amino-2-methyl-5-(diphosphooxymethyl)pyrimidine. Threonine 131–threonine 133 lines the 2-[(2R,5Z)-2-carboxy-4-methylthiazol-5(2H)-ylidene]ethyl phosphate pocket. Lysine 134 lines the 4-amino-2-methyl-5-(diphosphooxymethyl)pyrimidine pocket. Residues glycine 160 and valine 180–serine 181 contribute to the 2-[(2R,5Z)-2-carboxy-4-methylthiazol-5(2H)-ylidene]ethyl phosphate site.

The protein belongs to the thiamine-phosphate synthase family. Mg(2+) is required as a cofactor.

It carries out the reaction 2-[(2R,5Z)-2-carboxy-4-methylthiazol-5(2H)-ylidene]ethyl phosphate + 4-amino-2-methyl-5-(diphosphooxymethyl)pyrimidine + 2 H(+) = thiamine phosphate + CO2 + diphosphate. The catalysed reaction is 2-(2-carboxy-4-methylthiazol-5-yl)ethyl phosphate + 4-amino-2-methyl-5-(diphosphooxymethyl)pyrimidine + 2 H(+) = thiamine phosphate + CO2 + diphosphate. The enzyme catalyses 4-methyl-5-(2-phosphooxyethyl)-thiazole + 4-amino-2-methyl-5-(diphosphooxymethyl)pyrimidine + H(+) = thiamine phosphate + diphosphate. It participates in cofactor biosynthesis; thiamine diphosphate biosynthesis; thiamine phosphate from 4-amino-2-methyl-5-diphosphomethylpyrimidine and 4-methyl-5-(2-phosphoethyl)-thiazole: step 1/1. Functionally, condenses 4-methyl-5-(beta-hydroxyethyl)thiazole monophosphate (THZ-P) and 2-methyl-4-amino-5-hydroxymethyl pyrimidine pyrophosphate (HMP-PP) to form thiamine monophosphate (TMP). This chain is Thiamine-phosphate synthase, found in Picrophilus torridus (strain ATCC 700027 / DSM 9790 / JCM 10055 / NBRC 100828 / KAW 2/3).